A 310-amino-acid chain; its full sequence is Cytochrome f (310 aa).

The first 27 residues, 1–27, serve as a signal peptide directing secretion; sequence MRRLLSPLFAALIVGVTVLTAPSTSWA. 4 residues coordinate heme: tyrosine 28, cysteine 48, cysteine 51, and histidine 52. Residues 277 to 297 traverse the membrane as a helical segment; sequence IYGLLAFFAAVALAQIMLVLK.

Belongs to the cytochrome f family. In terms of assembly, the 4 large subunits of the cytochrome b6-f complex are cytochrome b6, subunit IV (17 kDa polypeptide, PetD), cytochrome f and the Rieske protein, while the 4 small subunits are PetG, PetL, PetM and PetN. The complex functions as a dimer. Heme is required as a cofactor.

It is found in the cellular thylakoid membrane. In terms of biological role, component of the cytochrome b6-f complex, which mediates electron transfer between photosystem II (PSII) and photosystem I (PSI), cyclic electron flow around PSI, and state transitions. This chain is Cytochrome f, found in Synechococcus sp. (strain WH7803).